Here is a 305-residue protein sequence, read N- to C-terminus: Zinc transporter ZIP9 (305 aa).

The helical transmembrane segment at 7–27 (ICLLSLAMLVACYVAGIIPLA) threads the bilayer. N-linked (GlcNAc...) asparagine glycosylation occurs at asparagine 29. Transmembrane regions (helical) follow at residues 35-55 (LKLV…AVIV), 104-124 (AYIG…DQIG), 144-164 (ITTT…LGAA), 174-194 (LIVF…LVSF), and 208-228 (HLLV…LGLS). Residue asparagine 239 is glycosylated (N-linked (GlcNAc...) asparagine). 2 helical membrane passes run 242–262 (GVAM…HVLP) and 284–304 (LEVA…IGHH).

The protein belongs to the ZIP transporter (TC 2.A.5) family.

It localises to the golgi apparatus. The protein localises to the trans-Golgi network membrane. Its subcellular location is the cell membrane. The protein resides in the cytoplasm. It is found in the perinuclear region. It localises to the mitochondrion. The protein localises to the nucleus. The catalysed reaction is Zn(2+)(in) = Zn(2+)(out). In terms of biological role, transports zinc ions across cell and organelle membranes into the cytoplasm and regulates intracellular zinc homeostasis. Participates in the zinc ions efflux out of the secretory compartments. Regulates intracellular zinc level, resulting in the enhancement of AKT1 and MAPK3/MAPK1 (Erk1/2) phosphorylation in response to the BCR activation. Also functions as a membrane androgen receptor that mediates, through a G protein, the non-classical androgen signaling pathway, characterized by the activation of MAPK3/MAPK1 (Erk1/2) and transcription factors CREB1 or ATF1. Moreover, has dual functions as a membrane-bound androgen receptor and as an androgen-dependent zinc transporter both of which are mediated through an inhibitory G protein (Gi) that mediates both MAP kinase and zinc signaling leading to the androgen-dependent apoptotic process. The polypeptide is Zinc transporter ZIP9 (Gallus gallus (Chicken)).